A 382-amino-acid chain; its full sequence is Alkaline serine protease ver112 (382 aa).

An N-terminal signal peptide occupies residues 1–15 (MRLSIIAAVLPLALA). A propeptide spanning residues 16 to 102 (APVAEPEIAP…IEQDAIFSIN (87 aa)) is cleaved from the precursor. The 44-residue stretch at 56 to 99 (SKIPGIERVYENVLNGFSATLSNEELERLRRDPDVESIEQDAIF) folds into the Inhibitor I9 domain. A Peptidase S8 domain is found at 111 to 382 (TWGLTRISHR…VNYLAFNGAT (272 aa)). 2 disulfide bridges follow: cysteine 138/cysteine 227 and cysteine 282/cysteine 353. Residues aspartate 143, histidine 173, and serine 328 each act as charge relay system in the active site.

Belongs to the peptidase S8 family.

It localises to the secreted. Inhibited by phenylmethylsulfonyl fluoride (PMSF). Its function is as follows. Serine protease which can degrade the nematode cuticle. This Corniculantispora psalliotae (Lecanicillium psalliotae) protein is Alkaline serine protease ver112.